The primary structure comprises 438 residues: 23S rRNA (uracil(1939)-C(5))-methyltransferase RlmD (438 aa).

Positions Lys-8–Lys-68 constitute a TRAM domain. Residues Cys-81, Cys-87, Cys-90, and Cys-168 each coordinate [4Fe-4S] cluster. S-adenosyl-L-methionine is bound by residues Gln-271, Phe-300, Asn-305, Glu-321, Asp-348, and Asp-369. The Nucleophile role is filled by Cys-395.

The protein belongs to the class I-like SAM-binding methyltransferase superfamily. RNA M5U methyltransferase family. RlmD subfamily.

It carries out the reaction uridine(1939) in 23S rRNA + S-adenosyl-L-methionine = 5-methyluridine(1939) in 23S rRNA + S-adenosyl-L-homocysteine + H(+). Its function is as follows. Catalyzes the formation of 5-methyl-uridine at position 1939 (m5U1939) in 23S rRNA. In Haemophilus influenzae (strain 86-028NP), this protein is 23S rRNA (uracil(1939)-C(5))-methyltransferase RlmD.